The sequence spans 416 residues: Enterobactin exporter EntS (416 aa).

The Cytoplasmic portion of the chain corresponds to 1–21 (MNRQSWLLNLSLLKTHPAFRA). Residues 22-42 (VFLARFISIVSLGLLGVAVPV) traverse the membrane as a helical segment. The Periplasmic portion of the chain corresponds to 43–55 (QIQMMTHSTWQVG). Residues 56–76 (LSVTLTGSAMFVGLMVGGVLA) traverse the membrane as a helical segment. Topologically, residues 77-83 (DRYERKK) are cytoplasmic. A helical membrane pass occupies residues 84-104 (VILLARGTCGIGFIGLCLNAL). Residues 105-109 (LPEPS) lie on the Periplasmic side of the membrane. A helical membrane pass occupies residues 110–130 (LLAIYLLGLWDGFFASLGVTA). Topologically, residues 131 to 156 (LLAATPALVGRENLMQAGAITMLTVR) are cytoplasmic. Residues 157–177 (LGSVISPMLGGVLLATGGVAW) traverse the membrane as a helical segment. Asn178 is a topological domain (periplasmic). Residues 179–199 (YGLAAAGTFITLLPLLSLPAL) form a helical membrane-spanning segment. Residues 200–218 (PPPPQPREHPLKSLLAAFR) are Cytoplasmic-facing. Residues 219–239 (FLLSSPLIGGIALLGGLLTMA) traverse the membrane as a helical segment. At 240-256 (SAVRVLYPALAINWHMS) the chain is on the periplasmic side. The helical transmembrane segment at 257–277 (AAQIGLLYAAIPLGAAVGALT) threads the bilayer. At 278-287 (SGQLAHSVRP) the chain is on the cytoplasmic side. Residues 288–307 (GLLMLVSTVGSFLAIGVFGL) traverse the membrane as a helical segment. The Periplasmic segment spans residues 308 to 313 (MPVWLL). A helical membrane pass occupies residues 314–336 (GVICLALFGWLSAISSLLQYTLL). The Cytoplasmic segment spans residues 337 to 356 (QTQTPEAMLGRINGLWTAQN). Residues 357 to 377 (VTGDAIGAALLGGLGAMMTPV) form a helical membrane-spanning segment. Position 378 (Ala378) is a topological domain, periplasmic. Residues 379 to 399 (SASVSGFGLVIVGLLLMLLLG) traverse the membrane as a helical segment. Residues 400–416 (ELRRFRQPPPVPDGAPL) lie on the Cytoplasmic side of the membrane.

It belongs to the major facilitator superfamily. EntS (TC 2.A.1.38) family.

It localises to the cell inner membrane. In terms of biological role, component of an export pathway for enterobactin. This is Enterobactin exporter EntS from Citrobacter koseri (strain ATCC BAA-895 / CDC 4225-83 / SGSC4696).